A 433-amino-acid chain; its full sequence is PC-esterase domain-containing protein 1B (433 aa).

Residues 386–433 (PPCHQRQAPVVHRGFPRHFARGPYSNPWRDRPRRPPKHSPAGLESRPQ) form a disordered region.

It belongs to the PC-esterase family.

The chain is PC-esterase domain-containing protein 1B (Pced1b) from Mus musculus (Mouse).